The primary structure comprises 265 residues: Cyclin-C (265 aa).

A Cyclin N-terminal domain is found at 48–151 (IQVLGEQLKL…LLENLDCCLI (104 aa)).

It belongs to the cyclin family. Cyclin C subfamily. In terms of assembly, component of the Cdk8 module of the Mediator complex.

The protein localises to the nucleus. In terms of biological role, component of the Mediator complex, a coactivator involved in regulated gene transcription of nearly all RNA polymerase II-dependent genes. Mediator functions as a bridge to convey information from gene-specific regulatory proteins to the basal RNA polymerase II transcription machinery. Mediator is recruited to promoters by direct interactions with regulatory proteins and serves as a scaffold for the assembly of a functional preinitiation complex with RNA polymerase II and the general transcription factors. Binds to and activates cyclin-dependent kinase Cdk8 that phosphorylates the CTD (C-terminal domain) of the large subunit of RNA polymerase II (RNAp II), which may inhibit the formation of a transcription initiation complex. The polypeptide is Cyclin-C (CycC) (Aedes aegypti (Yellowfever mosquito)).